We begin with the raw amino-acid sequence, 185 residues long: Somatotropin (185 aa).

A disulfide bridge links Cys52 with Cys158. Glu167 lines the Zn(2+) pocket. Cys175 and Cys183 are disulfide-bonded.

This sequence belongs to the somatotropin/prolactin family.

The protein resides in the secreted. Its function is as follows. Growth hormone plays an important role in growth control and is involved in the regulation of several anabolic processes. Implicated as an osmoregulatory substance important for seawater adaptation. This Katsuwonus pelamis (Skipjack tuna) protein is Somatotropin (gh).